We begin with the raw amino-acid sequence, 119 residues long: Phosphoribosyl-AMP cyclohydrolase (119 aa).

Asp77 is a binding site for Mg(2+). Cys78 is a Zn(2+) binding site. The Mg(2+) site is built by Asp79 and Asp81. Residues Cys94 and Cys101 each coordinate Zn(2+).

The protein belongs to the PRA-CH family. In terms of assembly, homodimer. Requires Mg(2+) as cofactor. The cofactor is Zn(2+).

Its subcellular location is the cytoplasm. It catalyses the reaction 1-(5-phospho-beta-D-ribosyl)-5'-AMP + H2O = 1-(5-phospho-beta-D-ribosyl)-5-[(5-phospho-beta-D-ribosylamino)methylideneamino]imidazole-4-carboxamide. The protein operates within amino-acid biosynthesis; L-histidine biosynthesis; L-histidine from 5-phospho-alpha-D-ribose 1-diphosphate: step 3/9. Catalyzes the hydrolysis of the adenine ring of phosphoribosyl-AMP. This is Phosphoribosyl-AMP cyclohydrolase from Dinoroseobacter shibae (strain DSM 16493 / NCIMB 14021 / DFL 12).